The chain runs to 88 residues: Period circadian protein (88 aa).

The disordered stretch occupies residues 23–88 (VTNTSIAGTG…VTLTESLLNK (66 aa)). 16 consecutive repeat copies span residues 30–31 (GT), 33–34 (GT), 35–36 (GT), 37–38 (GT), 39–40 (GT), 41–42 (GT), 43–44 (GT), 45–46 (GT), 47–48 (GT), 49–50 (GT), 51–52 (GT), 53–54 (GT), 55–56 (GT), 57–58 (GT), 59–60 (GT), and 61–62 (GN). The 16 X 2 AA tandem repeats of G-[TN] stretch occupies residues 30 to 62 (GTGGTGTGTGTGTGTGTGTGTGTGTGTGTGTGN). Gly residues predominate over residues 30–62 (GTGGTGTGTGTGTGTGTGTGTGTGTGTGTGTGN). Residues 79-88 (VTLTESLLNK) are compositionally biased toward polar residues.

In terms of assembly, forms a heterodimer with timeless (TIM); the complex then translocates into the nucleus. Post-translationally, phosphorylated with a circadian rhythmicity, probably by the double-time protein (dbt). Phosphorylation could be implicated in the stability of per monomer and in the formation of heterodimer per-tim.

It is found in the nucleus. Its subcellular location is the cytoplasm. The protein resides in the perinuclear region. In terms of biological role, essential for biological clock functions. Determines the period length of circadian and ultradian rhythms; an increase in PER dosage leads to shortened circadian rhythms and a decrease leads to lengthened circadian rhythms. Essential for the circadian rhythmicity of locomotor activity, eclosion behavior, and for the rhythmic component of the male courtship song that originates in the thoracic nervous system. The biological cycle depends on the rhythmic formation and nuclear localization of the TIM-PER complex. Light induces the degradation of TIM, which promotes elimination of PER. Nuclear activity of the heterodimer coordinatively regulates PER and TIM transcription through a negative feedback loop. Behaves as a negative element in circadian transcriptional loop. Does not appear to bind DNA, suggesting indirect transcriptional inhibition. This is Period circadian protein (per) from Drosophila teissieri (Fruit fly).